The primary structure comprises 390 residues: Putative glutamate--cysteine ligase 2 (390 aa).

Belongs to the glutamate--cysteine ligase type 2 family. YbdK subfamily.

It catalyses the reaction L-cysteine + L-glutamate + ATP = gamma-L-glutamyl-L-cysteine + ADP + phosphate + H(+). In terms of biological role, ATP-dependent carboxylate-amine ligase which exhibits weak glutamate--cysteine ligase activity. This is Putative glutamate--cysteine ligase 2 from Chloroflexus aggregans (strain MD-66 / DSM 9485).